The following is a 354-amino-acid chain: Peptide-N(4)-(N-acetyl-beta-D-glucosaminyl)asparagine amidase F (354 aa).

Positions 1-40 (MRKLLIFSISAYLMAGIVSCKGVDSATPVTEDRLALNAVN) are cleaved as a signal peptide. An intrachain disulfide couples Cys91 to Cys96. Active-site residues include Asp100, Glu158, and Glu246. 2 cysteine pairs are disulfide-bonded: Cys244–Cys248 and Cys271–Cys292.

In terms of assembly, monomer.

The enzyme catalyses Hydrolysis of an N(4)-(acetyl-beta-D-glucosaminyl)asparagine residue in which the glucosamine residue may be further glycosylated, to yield a (substituted) N-acetyl-beta-D-glucosaminylamine and a peptide containing an aspartate residue.. Its function is as follows. Cleaves an entire glycan from a glycoprotein. Requires that the glycosylated asparagine moiety (reaction 1) be substituted on its amino (R1) and carboxyl (R2) terminus with a polypeptide chain. The protein is Peptide-N(4)-(N-acetyl-beta-D-glucosaminyl)asparagine amidase F (ngl) of Elizabethkingia miricola (Chryseobacterium miricola).